A 152-amino-acid polypeptide reads, in one-letter code: MTAKFRILVLNGPNLNLLGKREPGIYGAATLDDIVGRLQQLAAELDVELTHKQSNAEYELVDTIHQAMGTVDFILINPAAFTHTSVAIRDALLGVAIPFIEIHLSNVHAREPFRHHSFLSDVAKGVICGLGADGYEFALTAAVRHLERSSNN.

The active-site Proton acceptor is Tyr26. Residues Asn77, His83, and Asp90 each contribute to the substrate site. The active-site Proton donor is the His103. Substrate-binding positions include 104 to 105 and Arg114; that span reads LS.

The protein belongs to the type-II 3-dehydroquinase family. In terms of assembly, homododecamer.

It carries out the reaction 3-dehydroquinate = 3-dehydroshikimate + H2O. It functions in the pathway metabolic intermediate biosynthesis; chorismate biosynthesis; chorismate from D-erythrose 4-phosphate and phosphoenolpyruvate: step 3/7. Functionally, catalyzes a trans-dehydration via an enolate intermediate. The sequence is that of 3-dehydroquinate dehydratase from Tolumonas auensis (strain DSM 9187 / NBRC 110442 / TA 4).